Here is a 603-residue protein sequence, read N- to C-terminus: Conglutin beta 2 (603 aa).

The N-terminal stretch at 1–30 is a signal peptide; that stretch reads MANMRVKFPTLVLLLGIVFLMAVSIGIAYG. The segment covering 36 to 105 has biased composition (basic and acidic residues); the sequence is KNHERPQERE…REPSRGREQE (70 aa). 3 disordered regions span residues 36–177, 343–363, and 375–399; these read KNHE…RNPY, DGQE…DQGV, and LRKH…LRSD. Over residues 137–147 the composition is skewed to low complexity; sequence QGSSSSSGRQS. Over residues 148–172 the composition is skewed to basic and acidic residues; sequence GYERREQREEREQQQEQDSRSESRR. Positions 177–335 constitute a Cupin type-1 1 domain; sequence YYFSYERFQT…TFNTRYEEIQ (159 aa). Over residues 381 to 393 the composition is skewed to low complexity; it reads SSSGKGKPSESGP. Residues 394 to 554 form the Cupin type-1 2 domain; sequence FNLRSDEPIY…TFPGSVEDVE (161 aa). N-linked (GlcNAc...) asparagine glycosylation occurs at Asn-504. The segment covering 564 to 574 has biased composition (low complexity); sequence YFANAQPQQQQ. The tract at residues 564-583 is disordered; it reads YFANAQPQQQQQREKEGRRG.

The protein belongs to the 7S seed storage protein family. In terms of assembly, component of globulins complexes which accumulate in seeds.

Seed storage protein. Accumulates during seed development and is hydrolyzed after germination to provide a carbon and nitrogen source for the developing seedling. The polypeptide is Conglutin beta 2 (Lupinus angustifolius (Narrow-leaved blue lupine)).